The chain runs to 290 residues: UPF0761 membrane protein YihY (290 aa).

Transmembrane regions (helical) follow at residues 44–64, 104–124, 140–160, 183–203, 210–230, and 244–264; these read LLSL…FPMF, VGAC…DSAL, FAVY…SLAI, VLPL…VPTT, AIVG…GFAL, and VLAV…IVLL.

It belongs to the UPF0761 family.

It localises to the cell inner membrane. The polypeptide is UPF0761 membrane protein YihY (Salmonella arizonae (strain ATCC BAA-731 / CDC346-86 / RSK2980)).